We begin with the raw amino-acid sequence, 218 residues long: Sodium channel regulatory subunit beta-1 (218 aa).

A signal peptide spans 1 to 18; that stretch reads MGTLLAFVVGAALVSSAW. Residues 19-157 are Extracellular-facing; the sequence is GGCVEVDSET…DKANRDMASI (139 aa). Cystine bridges form between C21–C43 and C40–C121. The 129-residue stretch at 22–150 folds into the Ig-like C2-type domain; the sequence is VEVDSETEAV…KIHLEVVDKA (129 aa). N-linked (GlcNAc...) asparagine glycans are attached at residues N93, N110, N114, and N135. The helical transmembrane segment at 158–179 threads the bilayer; it reads VSEIMMYVLIVVLTIWLVAEMV. Topologically, residues 180 to 218 are cytoplasmic; the sequence is YCYKKIAAATEAAAQENASEYLAITSESKENCTGVQVAE.

The protein belongs to the sodium channel auxiliary subunit SCN1B (TC 8.A.17) family. As to quaternary structure, a voltage-gated sodium (Nav) channel consists of an ion-conducting pore-forming alpha subunit functional on its own that is regulated by one or more beta subunits. Interacts with SCN1A; regulatory subunit of SCN1A/Nav1.1. Interacts with SCN3A; regulatory subunit of SCN3A/Nav1.3. Interacts with SCN4A; regulatory subunit of SCN4A/Nav1.4. Interacts with SCN5A; regulatory subunit of SCN5A/Nav1.5. Interacts with SCN8A; regulatory subunit of SCN8A/Nav1.6. Interacts with SCN9A; regulatory subunit of SCN9A/Nav1.7. Interacts with SCN10A; regulatory subunit of SCN10A/Nav1.8. Interacts with NFASC. Interacts with TMEM65.

It is found in the cell membrane. Its subcellular location is the perikaryon. The protein resides in the cell projection. It localises to the axon. In terms of biological role, regulatory subunit of multiple voltage-gated sodium (Nav) channels directly mediating the depolarization of excitable membranes. Navs, also called VGSCs (voltage-gated sodium channels) or VDSCs (voltage-dependent sodium channels), operate by switching between closed and open conformations depending on the voltage difference across the membrane. In the open conformation they allow Na(+) ions to selectively pass through the pore, along their electrochemical gradient. The influx of Na+ ions provokes membrane depolarization, initiating the propagation of electrical signals throughout cells and tissues. The accessory beta subunits participate in localization and functional modulation of the Nav channels. Modulates the activity of SCN1A/Nav1.1, SCN2A/Nav1.2, SCN3A/Nav1.3, SCN4A/Nav1.4, SCN5A/Nav1.5, SCN8A/Nav1.6, SCN9A/Nav1.7 and SCN10A/Nav1.8. This Bos taurus (Bovine) protein is Sodium channel regulatory subunit beta-1.